Reading from the N-terminus, the 296-residue chain is Sulfotransferase 1C2 (296 aa).

A 3'-phosphoadenylyl sulfate-binding site is contributed by 49–54 (KAGTTW). 107–109 (KTH) is a substrate binding site. His-109 (proton acceptor) is an active-site residue. Residues Arg-131, Ser-139, Tyr-194, and 228–233 (TSFEKM) each bind 3'-phosphoadenylyl sulfate. Phosphoserine is present on Ser-139. Ser-254 carries the phosphoserine modification. 256 to 260 (FMRKG) contacts 3'-phosphoadenylyl sulfate.

Belongs to the sulfotransferase 1 family. As to expression, found in adult stomach, kidney and thyroid gland, and in fetal kidney and liver.

It is found in the cytoplasm. It localises to the lysosome. The protein localises to the mitochondrion. The catalysed reaction is a phenol + 3'-phosphoadenylyl sulfate = an aryl sulfate + adenosine 3',5'-bisphosphate + H(+). It carries out the reaction cholesterol + 3'-phosphoadenylyl sulfate = cholesterol sulfate + adenosine 3',5'-bisphosphate + H(+). Its function is as follows. Sulfotransferase that utilizes 3'-phospho-5'-adenylyl sulfate (PAPS) to catalyze the sulfate conjugation of phenolic compounds. Does not transfer sulfate to steroids, dopamine, acetaminophen, or alpha-naphthol. Except in mitochondria, where it can add sulfate to cholesterol producing cholesterol sulfate, which alters mitochondrial membrane organization, and impacts protein complex mobility increasing state-III respiration, thereby modulating mitochondrial respiration. Catalyzes the sulfation of the carcinogenic N-hydroxy-2-acetylaminofluorene leading to highly reactive intermediates capable of forming DNA adducts, potentially resulting in mutagenesis. This Homo sapiens (Human) protein is Sulfotransferase 1C2 (SULT1C2).